The sequence spans 495 residues: Thiosulfate sulfurtransferase/rhodanese-like domain-containing protein 2 (495 aa).

Position 268 is a phosphoserine (serine 268). The 96-residue stretch at 300–395 (EQGNTIILDC…YLEEFPDGFY (96 aa)) folds into the Rhodanese domain. Cysteine 354 acts as the Cysteine persulfide intermediate in catalysis.

This chain is Thiosulfate sulfurtransferase/rhodanese-like domain-containing protein 2 (Tstd2), found in Mus musculus (Mouse).